A 258-amino-acid chain; its full sequence is Ribosomal RNA small subunit methyltransferase A (258 aa).

The S-adenosyl-L-methionine site is built by H13, L15, G40, E61, D86, and N106.

Belongs to the class I-like SAM-binding methyltransferase superfamily. rRNA adenine N(6)-methyltransferase family. RsmA subfamily.

It localises to the cytoplasm. It carries out the reaction adenosine(1518)/adenosine(1519) in 16S rRNA + 4 S-adenosyl-L-methionine = N(6)-dimethyladenosine(1518)/N(6)-dimethyladenosine(1519) in 16S rRNA + 4 S-adenosyl-L-homocysteine + 4 H(+). Specifically dimethylates two adjacent adenosines (A1518 and A1519) in the loop of a conserved hairpin near the 3'-end of 16S rRNA in the 30S particle. May play a critical role in biogenesis of 30S subunits. This is Ribosomal RNA small subunit methyltransferase A from Coxiella burnetii (strain Dugway 5J108-111).